Reading from the N-terminus, the 316-residue chain is Porphobilinogen deaminase (316 aa).

Cys-245 is modified (S-(dipyrrolylmethanemethyl)cysteine).

It belongs to the HMBS family. Monomer. It depends on dipyrromethane as a cofactor.

The enzyme catalyses 4 porphobilinogen + H2O = hydroxymethylbilane + 4 NH4(+). It functions in the pathway porphyrin-containing compound metabolism; protoporphyrin-IX biosynthesis; coproporphyrinogen-III from 5-aminolevulinate: step 2/4. Its pathway is porphyrin-containing compound metabolism; chlorophyll biosynthesis. Its function is as follows. Tetrapolymerization of the monopyrrole PBG into the hydroxymethylbilane pre-uroporphyrinogen in several discrete steps. The chain is Porphobilinogen deaminase from Synechococcus sp. (strain CC9311).